Here is a 338-residue protein sequence, read N- to C-terminus: Biotin synthase (338 aa).

A Radical SAM core domain is found at 46–270 (NEVQLSTLLS…VAVARITMPA (225 aa)). [4Fe-4S] cluster-binding residues include cysteine 61, cysteine 65, and cysteine 68. [2Fe-2S] cluster-binding residues include cysteine 105, cysteine 136, cysteine 196, and arginine 274.

It belongs to the radical SAM superfamily. Biotin synthase family. Homodimer. The cofactor is [4Fe-4S] cluster. It depends on [2Fe-2S] cluster as a cofactor.

The enzyme catalyses (4R,5S)-dethiobiotin + (sulfur carrier)-SH + 2 reduced [2Fe-2S]-[ferredoxin] + 2 S-adenosyl-L-methionine = (sulfur carrier)-H + biotin + 2 5'-deoxyadenosine + 2 L-methionine + 2 oxidized [2Fe-2S]-[ferredoxin]. It participates in cofactor biosynthesis; biotin biosynthesis; biotin from 7,8-diaminononanoate: step 2/2. Functionally, catalyzes the conversion of dethiobiotin (DTB) to biotin by the insertion of a sulfur atom into dethiobiotin via a radical-based mechanism. This Rhizorhabdus wittichii (strain DSM 6014 / CCUG 31198 / JCM 15750 / NBRC 105917 / EY 4224 / RW1) (Sphingomonas wittichii) protein is Biotin synthase.